A 75-amino-acid polypeptide reads, in one-letter code: Small ribosomal subunit protein eS28 (75 aa).

This sequence belongs to the eukaryotic ribosomal protein eS28 family.

In Methanococcus aeolicus (strain ATCC BAA-1280 / DSM 17508 / OCM 812 / Nankai-3), this protein is Small ribosomal subunit protein eS28.